A 446-amino-acid polypeptide reads, in one-letter code: MSSSVWQERRHGEDKQRRNDHRSPFQRDRARILHSAAFRRLQAKTQVLGVGMNDFYRTRLTHSLEVSQIGTGIAAQLSRKYPEHKPLLGSMSLLESLCLAHDIGHPPFGHGGEVALNYMMRHHGGFEGNGQTFRILSKLEPYTEAFGMNLCRRTMLGILKYPASQSLLFVAGSHPEITNHRQLKPSQWPPVKGIFDDDSDIFDWVLEPLSVADRARFTSVQPSLQPNYPHLRTQFKSFDCSIMELADDIAYAVHDLEDAIVMGIVTASQWQQDVAPTLKHSGDPWIRQELADIGTKLFSHEHHLRKDAIGTLVNGFVTAIIINDDPAFEEPLLRFNASLEPEFANALNVLKQLVFKYVIRKPEIQMLEYKGQQIVMGLFEAFASDPERLLPLNTQERWRTSEQQGQNSHRVLADYISGMTDEFAGRLYQQLFSPKAGSNVELSKEM.

The disordered stretch occupies residues 1-28; that stretch reads MSSSVWQERRHGEDKQRRNDHRSPFQRD. A compositionally biased stretch (basic and acidic residues) spans 7 to 28; the sequence is QERRHGEDKQRRNDHRSPFQRD. In terms of domain architecture, HD spans 59–252; the sequence is RLTHSLEVSQ…MELADDIAYA (194 aa).

It belongs to the dGTPase family. Type 2 subfamily.

This chain is Deoxyguanosinetriphosphate triphosphohydrolase-like protein, found in Shewanella sp. (strain ANA-3).